The chain runs to 321 residues: Acetyl-coenzyme A carboxylase carboxyl transferase subunit alpha (321 aa).

The region spanning 39-293 is the CoA carboxyltransferase C-terminal domain; it reads KLEEKSRKLT…KTELKRNLEE (255 aa).

Belongs to the AccA family. Acetyl-CoA carboxylase is a heterohexamer composed of biotin carboxyl carrier protein (AccB), biotin carboxylase (AccC) and two subunits each of ACCase subunit alpha (AccA) and ACCase subunit beta (AccD).

The protein resides in the cytoplasm. It catalyses the reaction N(6)-carboxybiotinyl-L-lysyl-[protein] + acetyl-CoA = N(6)-biotinyl-L-lysyl-[protein] + malonyl-CoA. It participates in lipid metabolism; malonyl-CoA biosynthesis; malonyl-CoA from acetyl-CoA: step 1/1. Its function is as follows. Component of the acetyl coenzyme A carboxylase (ACC) complex. First, biotin carboxylase catalyzes the carboxylation of biotin on its carrier protein (BCCP) and then the CO(2) group is transferred by the carboxyltransferase to acetyl-CoA to form malonyl-CoA. This is Acetyl-coenzyme A carboxylase carboxyl transferase subunit alpha from Methylococcus capsulatus (strain ATCC 33009 / NCIMB 11132 / Bath).